The chain runs to 353 residues: DNA integrity scanning protein DisA (353 aa).

In terms of domain architecture, DAC spans 6-144 (DKELMNILKI…GGIKYVLRDS (139 aa)). ATP is bound by residues Gly73, Leu91, and 104 to 108 (TRHRT).

The protein belongs to the DisA family. Homooctamer. It depends on Mg(2+) as a cofactor.

The enzyme catalyses 2 ATP = 3',3'-c-di-AMP + 2 diphosphate. Participates in a DNA-damage check-point that is active prior to asymmetric division when DNA is damaged. DisA forms globular foci that rapidly scan along the chromosomes during sporulation, searching for lesions. When a lesion is present, DisA pauses at the lesion site. This triggers a cellular response that culminates in a temporary block in sporulation initiation. Its function is as follows. Also has diadenylate cyclase activity, catalyzing the condensation of 2 ATP molecules into cyclic di-AMP (c-di-AMP). c-di-AMP acts as a signaling molecule that couples DNA integrity with progression of sporulation. The rise in c-di-AMP level generated by DisA while scanning the chromosome, operates as a positive signal that advances sporulation; upon encountering a lesion, the DisA focus arrests at the damaged site and halts c-di-AMP synthesis. The chain is DNA integrity scanning protein DisA from Clostridium botulinum (strain Okra / Type B1).